The sequence spans 487 residues: Uronate isomerase (487 aa).

This sequence belongs to the metallo-dependent hydrolases superfamily. Uronate isomerase family.

It carries out the reaction D-glucuronate = D-fructuronate. It catalyses the reaction aldehydo-D-galacturonate = keto-D-tagaturonate. The protein operates within carbohydrate metabolism; pentose and glucuronate interconversion. This is Uronate isomerase from Caulobacter vibrioides (strain ATCC 19089 / CIP 103742 / CB 15) (Caulobacter crescentus).